Consider the following 379-residue polypeptide: Inactive deoxyhypusine synthase (379 aa).

Residues 1-48 (MLASVPAPRPAKKDSAASRRKSASKSTGAAVKDGSSARVSASGAAESP) form a disordered region. Residues 36-47 (SARVSASGAAES) show a composition bias toward low complexity. NAD(+) is bound by residues 115-119 (SNMIS), 141-143 (SAG), glutamate 147, and aspartate 256. Position 146-147 (146-147 (EE)) interacts with spermidine. Aspartate 261 contacts spermidine. Glycine 302 is an NAD(+) binding site. Histidine 307 serves as a coordination point for spermidine. 323–324 (TG) is an NAD(+) binding site. Residues 329–331 (GCV) and 338–344 (DDVACGL) each bind spermidine. NAD(+) is bound at residue 357–358 (DA).

The protein belongs to the deoxyhypusine synthase family.

The protein is Inactive deoxyhypusine synthase of Leishmania donovani.